Consider the following 858-residue polypeptide: MNEKLRILFSFLCFFYVLLVSPSQSNGQDISLSCGASEPAVDQDKKKWEPDTKFLKTPNTVHAPATYQDPSLLSTVPYMTSRIFTAPATYEIPVKGDKRHMLRLHFYPSTYTGLNILDSYFSVAANDLTLLSNFSAAITCQALTQAYLVREYSLAPSEKDVLSIIFTPSDKHPKAFAFINGIEVIPMPELFDTASLVGFSDQTSDTKTANLQTMFRLNVGGQDIPGSQDSGGLTRTWYNDAPYIFSAGLGVTLQASNNFRIDYQKMPVSTAPADVYKTARSQGPNGDINMKSNLTWMFQVDTNFTYIMRLHFCEFQLAKINQKVFNIFINNRTAQGDTNPADILGWTGGKGIPTYKDYAIYVDANTGGGGEEISLQMTPSTFGQPEYYDSQLNGLEIFKIDTMKNLAGPNPKPSPMQANEDVKKDFQGDKRITAFVIGSAGGVAAVLFCALCFTMYQRKRKFSGSDSHTSSWLPIYGNSHTSATKSTISGKSNNGSHLSNLAAGLCRRFSLSEIKHGTHNFDESNVIGVGGFGKVYKGVIDGGTKVAIKKSNPNSEQGLNEFETEIELLSRLRHKHLVSLIGYCDEGGEMCLIYDYMSLGTLREHLYNTKRPQLTWKRRLEIAIGAARGLHYLHTGAKYTIIHRDVKTTNILLDENWVAKVSDFGLSKTGPNMNGGHVTTVVKGSFGYLDPEYFRRQQLTEKSDVYSFGVVLFEVLCARPALNPSLSKEQVSLGDWAMNCKRKGTLEDIIDPNLKGKINPECLKKFADTAEKCLSDSGLDRPTMGDVLWNLEFALQLQETADGSRHRTPSNGGGSVDLGGGGGGVTVNISAGESDLGDDLSSEENSGIFSQIVNPKGR.

The first 27 residues, 1–27, serve as a signal peptide directing secretion; that stretch reads MNEKLRILFSFLCFFYVLLVSPSQSNG. Over 28–431 the chain is Extracellular; the sequence is QDISLSCGAS…VKKDFQGDKR (404 aa). N133, N293, N303, and N331 each carry an N-linked (GlcNAc...) asparagine glycan. The helical transmembrane segment at 432 to 452 threads the bilayer; the sequence is ITAFVIGSAGGVAAVLFCALC. Residues 453-858 lie on the Cytoplasmic side of the membrane; it reads FTMYQRKRKF…FSQIVNPKGR (406 aa). Positions 521–794 constitute a Protein kinase domain; sequence FDESNVIGVG…GDVLWNLEFA (274 aa). ATP is bound by residues 527-535 and K549; that span reads IGVGGFGKV. The active-site Proton acceptor is D645. Residues 800 to 858 are disordered; it reads TADGSRHRTPSNGGGSVDLGGGGGGVTVNISAGESDLGDDLSSEENSGIFSQIVNPKGR. A compositionally biased stretch (gly residues) spans 811–825; it reads NGGGSVDLGGGGGGV. Polar residues predominate over residues 843–858; sequence EENSGIFSQIVNPKGR.

This sequence belongs to the protein kinase superfamily. Ser/Thr protein kinase family. As to expression, expressed in pollen, but not in pistils or seedlings.

Its subcellular location is the cell membrane. It catalyses the reaction L-seryl-[protein] + ATP = O-phospho-L-seryl-[protein] + ADP + H(+). The catalysed reaction is L-threonyl-[protein] + ATP = O-phospho-L-threonyl-[protein] + ADP + H(+). Its function is as follows. Receptor-like protein kinase that controls pollen tube behavior by directing rupture at proper timing to release the sperm cell. The protein is Receptor-like protein kinase ANXUR2 (ANX2) of Arabidopsis thaliana (Mouse-ear cress).